The sequence spans 234 residues: Zinc transport system ATP-binding protein AdcC (234 aa).

The region spanning 4-234 (ITVEDLSFYY…HENGQEVGHA (231 aa)) is the ABC transporter domain. 36–43 (GENGAAKT) contacts ATP.

The protein belongs to the ABC transporter superfamily.

Part of the ATP-driven transport system AdcABC for zinc. Required for transformability. In Streptococcus pneumoniae (strain ATCC BAA-255 / R6), this protein is Zinc transport system ATP-binding protein AdcC (adcC).